A 423-amino-acid chain; its full sequence is UDP-N-acetylglucosamine 1-carboxyvinyltransferase 1 (423 aa).

Residue 23-24 participates in phosphoenolpyruvate binding; the sequence is KN. Position 96 (arginine 96) interacts with UDP-N-acetyl-alpha-D-glucosamine. Catalysis depends on cysteine 120, which acts as the Proton donor. Cysteine 120 carries the post-translational modification 2-(S-cysteinyl)pyruvic acid O-phosphothioketal. UDP-N-acetyl-alpha-D-glucosamine is bound by residues 125 to 129, aspartate 309, and valine 331; that span reads RPIDL.

The protein belongs to the EPSP synthase family. MurA subfamily.

Its subcellular location is the cytoplasm. It carries out the reaction phosphoenolpyruvate + UDP-N-acetyl-alpha-D-glucosamine = UDP-N-acetyl-3-O-(1-carboxyvinyl)-alpha-D-glucosamine + phosphate. It participates in cell wall biogenesis; peptidoglycan biosynthesis. Cell wall formation. Adds enolpyruvyl to UDP-N-acetylglucosamine. This is UDP-N-acetylglucosamine 1-carboxyvinyltransferase 1 from Streptococcus thermophilus (strain ATCC BAA-250 / LMG 18311).